Here is a 199-residue protein sequence, read N- to C-terminus: uncharacterized protein (199 aa).

Residues 72–116 (EIYSEIENEESDIEEMSEEMKAFFAKTQEHRQKLKEQRAAEKRKE) are a coiled coil. Residues 98-117 (TQEHRQKLKEQRAAEKRKEG) show a composition bias toward basic and acidic residues. The tract at residues 98 to 127 (TQEHRQKLKEQRAAEKRKEGQSSSKSQEEY) is disordered.

This is an uncharacterized protein from Caenorhabditis elegans.